Consider the following 110-residue polypeptide: Nitrogenase-stabilizing/protective protein NifW (110 aa).

Belongs to the NifW family. As to quaternary structure, homotrimer; associates with NifD.

Its function is as follows. May protect the nitrogenase Fe-Mo protein from oxidative damage. The sequence is that of Nitrogenase-stabilizing/protective protein NifW from Acidithiobacillus ferrooxidans (strain ATCC 23270 / DSM 14882 / CIP 104768 / NCIMB 8455) (Ferrobacillus ferrooxidans (strain ATCC 23270)).